The sequence spans 272 residues: Alcohol dehydrogenase-related 31 kDa protein (272 aa).

11-34 (YVADCGGIALETSKVLMTKNIAKL) contacts NAD(+). S139 lines the substrate pocket. Catalysis depends on Y152, which acts as the Proton acceptor.

Belongs to the short-chain dehydrogenases/reductases (SDR) family.

The protein is Alcohol dehydrogenase-related 31 kDa protein (Adhr) of Drosophila teissieri (Fruit fly).